We begin with the raw amino-acid sequence, 330 residues long: ADP-L-glycero-D-manno-heptose-6-epimerase (330 aa).

Residues 11 to 12 (FI), 32 to 33 (DN), Lys39, Lys54, 75 to 79 (EGACS), and Asn92 contribute to the NADP(+) site. Tyr139 acts as the Proton acceptor in catalysis. Residue Lys143 participates in NADP(+) binding. A substrate-binding site is contributed by Asn168. Residues Val169 and Lys177 each coordinate NADP(+). The Proton acceptor role is filled by Lys177. Substrate contacts are provided by residues Arg179, His186, 200–203 (FGEY), Arg213, and Tyr292.

Belongs to the NAD(P)-dependent epimerase/dehydratase family. HldD subfamily. In terms of assembly, homopentamer. NADP(+) is required as a cofactor.

It catalyses the reaction ADP-D-glycero-beta-D-manno-heptose = ADP-L-glycero-beta-D-manno-heptose. It participates in nucleotide-sugar biosynthesis; ADP-L-glycero-beta-D-manno-heptose biosynthesis; ADP-L-glycero-beta-D-manno-heptose from D-glycero-beta-D-manno-heptose 7-phosphate: step 4/4. In terms of biological role, catalyzes the interconversion between ADP-D-glycero-beta-D-manno-heptose and ADP-L-glycero-beta-D-manno-heptose via an epimerization at carbon 6 of the heptose. In Burkholderia mallei (strain NCTC 10247), this protein is ADP-L-glycero-D-manno-heptose-6-epimerase.